The sequence spans 398 residues: 1-deoxy-D-xylulose 5-phosphate reductoisomerase (398 aa).

Residues T14, G15, S16, I17, Q42, and N128 each contribute to the NADPH site. Position 129 (K129) interacts with 1-deoxy-D-xylulose 5-phosphate. Position 130 (E130) interacts with NADPH. D154 contributes to the Mn(2+) binding site. 1-deoxy-D-xylulose 5-phosphate-binding residues include S155, E156, S185, and H208. E156 provides a ligand contact to Mn(2+). An NADPH-binding site is contributed by G214. Positions 221, 226, 227, and 230 each coordinate 1-deoxy-D-xylulose 5-phosphate. E230 lines the Mn(2+) pocket.

The protein belongs to the DXR family. The cofactor is Mg(2+). Mn(2+) is required as a cofactor.

It catalyses the reaction 2-C-methyl-D-erythritol 4-phosphate + NADP(+) = 1-deoxy-D-xylulose 5-phosphate + NADPH + H(+). Its pathway is isoprenoid biosynthesis; isopentenyl diphosphate biosynthesis via DXP pathway; isopentenyl diphosphate from 1-deoxy-D-xylulose 5-phosphate: step 1/6. Its function is as follows. Catalyzes the NADPH-dependent rearrangement and reduction of 1-deoxy-D-xylulose-5-phosphate (DXP) to 2-C-methyl-D-erythritol 4-phosphate (MEP). The protein is 1-deoxy-D-xylulose 5-phosphate reductoisomerase of Dechloromonas aromatica (strain RCB).